Reading from the N-terminus, the 226-residue chain is ATP synthase F(0) complex subunit a (226 aa).

6 helical membrane-spanning segments follow: residues 12-32 (PTVL…LLIP), 68-88 (WSLM…LGLL), 97-117 (QLSM…AMGL), 138-158 (IPML…ALAV), 182-202 (LAIN…LTIL), and 203-223 (ETAI…LYLH).

The protein belongs to the ATPase A chain family. As to quaternary structure, component of the ATP synthase complex composed at least of ATP5F1A/subunit alpha, ATP5F1B/subunit beta, ATP5MC1/subunit c (homooctomer), MT-ATP6/subunit a, MT-ATP8/subunit 8, ATP5ME/subunit e, ATP5MF/subunit f, ATP5MG/subunit g, ATP5MK/subunit k, ATP5MJ/subunit j, ATP5F1C/subunit gamma, ATP5F1D/subunit delta, ATP5F1E/subunit epsilon, ATP5PF/subunit F6, ATP5PB/subunit b, ATP5PD/subunit d, ATP5PO/subunit OSCP. ATP synthase complex consists of a soluble F(1) head domain (subunits alpha(3) and beta(3)) - the catalytic core - and a membrane F(0) domain - the membrane proton channel (subunits c, a, 8, e, f, g, k and j). These two domains are linked by a central stalk (subunits gamma, delta, and epsilon) rotating inside the F1 region and a stationary peripheral stalk (subunits F6, b, d, and OSCP). Interacts with DNAJC30; interaction is direct.

Its subcellular location is the mitochondrion inner membrane. The catalysed reaction is H(+)(in) = H(+)(out). Functionally, subunit a, of the mitochondrial membrane ATP synthase complex (F(1)F(0) ATP synthase or Complex V) that produces ATP from ADP in the presence of a proton gradient across the membrane which is generated by electron transport complexes of the respiratory chain. ATP synthase complex consist of a soluble F(1) head domain - the catalytic core - and a membrane F(1) domain - the membrane proton channel. These two domains are linked by a central stalk rotating inside the F(1) region and a stationary peripheral stalk. During catalysis, ATP synthesis in the catalytic domain of F(1) is coupled via a rotary mechanism of the central stalk subunits to proton translocation. With the subunit c (ATP5MC1), forms the proton-conducting channel in the F(0) domain, that contains two crucial half-channels (inlet and outlet) that facilitate proton movement from the mitochondrial intermembrane space (IMS) into the matrix. Protons are taken up via the inlet half-channel and released through the outlet half-channel, following a Grotthuss mechanism. The polypeptide is ATP synthase F(0) complex subunit a (Pongo abelii (Sumatran orangutan)).